Consider the following 513-residue polypeptide: ABC transporter H family member 2 (513 aa).

The region spanning 39 to 280 is the ABC transporter domain; it reads LTMKNIHKTY…EHYQKLYKEC (242 aa). An ATP-binding site is contributed by 75-82; sequence GTSGGGKT. The interval 291 to 471 is disordered; the sequence is VTSVFKNDDD…SSSYSNNNNN (181 aa). Positions 324 to 360 are enriched in low complexity; that stretch reads SYNNNNSNLNNNSNSNSNNNSNNNNSKNYASSSSSSS. Over residues 361 to 386 the composition is skewed to polar residues; that stretch reads VLNGKLSQSTVNNSSIYNHNNDSPFF. The span at 387-471 shows a compositional bias: low complexity; sequence NSNNNNNINN…SSSYSNNNNN (85 aa).

This sequence belongs to the ABC transporter superfamily.

The sequence is that of ABC transporter H family member 2 (abcH2) from Dictyostelium discoideum (Social amoeba).